A 539-amino-acid polypeptide reads, in one-letter code: Interleukin-2 receptor subunit beta (539 aa).

Positions 1-26 (MATIALPWSLSLYVFLLLLATPWASA) are cleaved as a signal peptide. Residues 27–240 (AVKNCSHLEC…RTRPADPMKE (214 aa)) lie on the Extracellular side of the membrane. Residues Asn30, Asn43, Asn55, and Asn71 are each glycosylated (N-linked (GlcNAc...) asparagine). A disulfide bridge connects residues Cys36 and Cys46. The cysteines at positions 74 and 86 are disulfide-linked. The 101-residue stretch at 135-235 (APHSLQVLHI…QPLTFRTRPA (101 aa)) folds into the Fibronectin type-III domain. Asn150 and Asn216 each carry an N-linked (GlcNAc...) asparagine glycan. A WSXWS motif motif is present at residues 221–225 (WSPWS). Residues 241–268 (ILPMSWLRYLLLVLGCFSGFFSCVYILV) traverse the membrane as a helical segment. Residues 269–539 (KCRYLGPWLK…LQAQDSVHLI (271 aa)) lie on the Cytoplasmic side of the membrane. The short motif at 281–289 (LKCHIPDPS) is the Box 1 motif element. Disordered regions lie at residues 395 to 419 (VEED…GEQD), 440 to 465 (PNTA…LPSL), and 477 to 516 (LERM…QGPI).

This sequence belongs to the type I cytokine receptor family. Type 4 subfamily. Non-covalent dimer of an alpha and a beta subunit. IL2R exists in 3 different forms: a high affinity dimer, an intermediate affinity monomer (beta subunit), and a low affinity monomer (alpha subunit). The high and intermediate affinity forms also associate with a gamma subunit. Interacts with SHB upon interleukin stimulation.

The protein resides in the cell membrane. It localises to the cell surface. In terms of biological role, receptor for interleukin-2. This beta subunit is involved in receptor mediated endocytosis and transduces the mitogenic signals of IL2. Probably in association with IL15RA, involved in the stimulation of neutrophil phagocytosis by IL15. This Mus musculus (Mouse) protein is Interleukin-2 receptor subunit beta (Il2rb).